A 634-amino-acid polypeptide reads, in one-letter code: Probable potassium transport system protein Kup (634 aa).

A run of 12 helical transmembrane segments spans residues 19–39 (AVGLMVGAVGVCYGDIGTSPL), 62–82 (VLSLIFWSLIWVVSIKYVIFV), 113–133 (FVVVAGLIGAALFYGDSMITP), 150–170 (GLEHWTVPLALIVLIGLFLIQ), 177–197 (IGILFGPVMVLWFGALAALGV), 225–245 (IGVAILGATVLALTGAEALYA), 259–279 (WFLLVLPALVLNYFGQGATIL), 291–311 (LLAPGWALLPMVALSTLATVI), 349–369 (IYIGGVNWALMVGVVLLVLGF), 379–399 (YGVAVTGTMLITTLLMGVVIW), 406–426 (LWLGVPFFCVMLAVDSLFFAA), and 431–451 (VVQGGAFPVIAGIVIFILMST).

It belongs to the HAK/KUP transporter (TC 2.A.72) family.

It is found in the cell inner membrane. It catalyses the reaction K(+)(in) + H(+)(in) = K(+)(out) + H(+)(out). Transport of potassium into the cell. Likely operates as a K(+):H(+) symporter. This is Probable potassium transport system protein Kup from Pseudomonas paraeruginosa (strain DSM 24068 / PA7) (Pseudomonas aeruginosa (strain PA7)).